The primary structure comprises 65 residues: Ferredoxin-like protein in vnf region (65 aa).

4Fe-4S ferredoxin-type domains follow at residues 2-29 (AMAI…VLQG) and 30-65 (GIYV…PLDD). The [4Fe-4S] cluster site is built by Cys-10, Cys-13, Cys-16, Cys-20, Cys-39, Cys-42, Cys-50, and Cys-54.

Requires [4Fe-4S] cluster as cofactor.

The protein is Ferredoxin-like protein in vnf region of Azotobacter chroococcum mcd 1.